Consider the following 385-residue polypeptide: Glucans biosynthesis protein C (385 aa).

10 helical membrane-spanning segments follow: residues Ala-17–Trp-37, Met-60–Leu-80, Val-91–Gln-111, Ile-137–Phe-157, Lys-173–Ile-193, Phe-212–Ile-232, Leu-239–Leu-259, Thr-274–Gly-294, Ala-311–Thr-331, and Trp-338–Ile-358.

The protein belongs to the acyltransferase 3 family. OpgC subfamily.

It localises to the cell membrane. Its pathway is glycan metabolism; osmoregulated periplasmic glucan (OPG) biosynthesis. Functionally, necessary for the succinyl substitution of periplasmic glucans. Could catalyze the transfer of succinyl residues from the cytoplasmic side of the membrane to the nascent glucan backbones on the periplasmic side of the membrane. The sequence is that of Glucans biosynthesis protein C from Escherichia coli O139:H28 (strain E24377A / ETEC).